A 748-amino-acid polypeptide reads, in one-letter code: SNF-related serine/threonine-protein kinase (748 aa).

A Protein kinase domain is found at 16–269 (YDLDKTLGRG…LEEIESHPWL (254 aa)). Residues 22-30 (LGRGHFAVV) and lysine 45 each bind ATP. Catalysis depends on aspartate 139, which acts as the Proton acceptor. The residue at position 162 (serine 162) is a Phosphoserine. Threonine 173 is modified (phosphothreonine; by LKB1). Positions 291–334 (SEEEHNSIIQRMVLGDIADRDAIVEALETNRYNHITATYFLLAE) constitute a UBA domain. 5 positions are modified to phosphoserine: serine 362, serine 390, serine 482, serine 495, and serine 518. The segment at 383-415 (SHATVPQSPARAGDNVLNGHRSKGLCDPAKKDE) is disordered. Residues 491–503 (EEGESDDEFDMDE) are compositionally biased toward acidic residues. The tract at residues 491–640 (EEGESDDEFD…SPSPASASAA (150 aa)) is disordered. A compositionally biased stretch (basic residues) spans 522–532 (VHKRYHRRKSQ). Residues 533-542 (GRGSSCSSSE) show a composition bias toward low complexity. An Omega-N-methylarginine modification is found at arginine 534. The segment covering 549-558 (ESRRRLDKDS) has biased composition (basic and acidic residues). Composition is skewed to gly residues over residues 575–592 (GSEGDGGGQSKPSSGGGV) and 600–614 (QGTGGGSQGGSGGTP). Serine 606 is modified (phosphoserine). The span at 629–640 (SSSPSPASASAA) shows a compositional bias: low complexity.

This sequence belongs to the protein kinase superfamily. CAMK Ser/Thr protein kinase family. It depends on Mg(2+) as a cofactor. Post-translationally, autophosphorylated. Phosphorylation on Thr-173 by STK11/LKB1 in complex with STE20-related adapter-alpha (STRADA) pseudo kinase and CAB39. Ubiquitously expressed in all tissues examined.

The protein resides in the nucleus. It catalyses the reaction L-seryl-[protein] + ATP = O-phospho-L-seryl-[protein] + ADP + H(+). The enzyme catalyses L-threonyl-[protein] + ATP = O-phospho-L-threonyl-[protein] + ADP + H(+). Its activity is regulated as follows. Activated by phosphorylation on Thr-173. Its function is as follows. May play a role in hematopoietic cell proliferation or differentiation. Potential mediator of neuronal apoptosis. This chain is SNF-related serine/threonine-protein kinase, found in Mus musculus (Mouse).